The following is a 336-amino-acid chain: MPKPKEYVLKKSEEIEGTKVEGPWLDDTKSLEEVVSLYTQIGFQATHLGKAIEIWRKIEEKREKGEEIRVFLGYTSNIVSSGLREIIAWLVKHRKVDVIVTTAGGVEEDFIKALKPFILGDWIVNDAELRKKGINRIGNIFVPNDRYIEFEKYMIPFFERILEIEREKGRPLTASEFIYELGRFMDEKLGKEKEKSIIYWAYRNEIPIFCPAITDGSIGDMLYFFKEERRDRELIIDIANDIVKLNNLAVTAKETASIILGGSLPKHAIINANLFRGGSDYAIYITTAVPWDGSLSGAPPSEGVSWGKIRAKADYVEIWADATLVFPILVWMVMKR.

K308 (nucleophile) is an active-site residue.

It belongs to the deoxyhypusine synthase family. NAD(+) serves as cofactor.

It catalyses the reaction [eIF5A protein]-L-lysine + spermidine = [eIF5A protein]-deoxyhypusine + propane-1,3-diamine. The protein operates within protein modification; eIF5A hypusination. In terms of biological role, catalyzes the NAD-dependent oxidative cleavage of spermidine and the subsequent transfer of the butylamine moiety of spermidine to the epsilon-amino group of a specific lysine residue of the eIF-5A precursor protein to form the intermediate deoxyhypusine residue. The polypeptide is Probable deoxyhypusine synthase (Pyrococcus furiosus (strain ATCC 43587 / DSM 3638 / JCM 8422 / Vc1)).